The sequence spans 375 residues: CD2 homolog (375 aa).

The N-terminal stretch at 1 to 16 is a signal peptide; the sequence is MIIILIFLIIPNIVLS. At 17–207 the chain is on the extracellular side; sequence IDYWVSFNKT…YLDFFQVASY (191 aa). Residues Asn24, Asn80, Asn105, Asn122, Asn134, Asn145, Asn168, Asn176, and Asn183 are each glycosylated (N-linked (GlcNAc...) asparagine; by host). Intrachain disulfides connect Cys123–Cys190 and Cys130–Cys173. A helical membrane pass occupies residues 208–228; sequence MFYMIIFIATGIIASIFISII. Over 229 to 375 the chain is Cytoplasmic; sequence TFLSLRKRKK…ISLIHVDRII (147 aa). Positions 242–278 are disordered; the sequence is EIESPSPSESNEEEQCQHDDTTSIHEPSPREPLLPKP. The segment covering 256–270 has biased composition (basic and acidic residues); the sequence is QCQHDDTTSIHEPSP. 5 tandem repeats follow at residues 305 to 310, 311 to 316, 317 to 322, 323 to 328, and 329 to 334. The interval 305–334 is 5 X 6 AA tandem repeats of K-[LP]-C-[PRS]-[PS]-[PS]; that stretch reads KLCPPPKPCPPPKPCPPPKPCPPPKPCPSS. The segment at 323–350 is disordered; it reads KPCPPPKPCPSSESCSPPESYSLPKPLP. Residues 332–346 show a composition bias toward low complexity; the sequence is PSSESCSPPESYSLP.

This sequence belongs to the asfivirus CD2 homolog protein family. As to quaternary structure, both glycosylated and nonglycosylated forms interact (via C-terminus) with the host AP-1 complex. Cleaved into two fragments of 63 kDa and 26 kDa containing respectively the glycosylated N-terminus and the nonglycosylated C-terminus. A full-length 89-kDa glycosylated form also exists.

The protein localises to the host membrane. The protein resides in the virion membrane. It localises to the host Golgi apparatus. In terms of biological role, may play an immunosuppressive role by inhibiting lymphocyte proliferation and subsequently facilitating viral replication and generalization of infection. Responsible for viral hemadsorption, which may help viral spread. Increases virus replication in the tick vector at the step of virus uptake or replication in the tick gut. May play a role in the host Golgi reorganization to yield viral factories. May play a role in host cell penetration. This Ornithodoros (relapsing fever ticks) protein is CD2 homolog.